Reading from the N-terminus, the 505-residue chain is Glycerol kinase (505 aa).

T12 provides a ligand contact to ADP. The ATP site is built by T12, T13, and S14. Residue T12 coordinates sn-glycerol 3-phosphate. R16 is a binding site for ADP. The sn-glycerol 3-phosphate site is built by R82, E83, Y134, and D249. Positions 82, 83, 134, 249, and 250 each coordinate glycerol. ADP contacts are provided by T271 and G315. T271, G315, Q319, and G416 together coordinate ATP. Residues G416 and N420 each coordinate ADP.

The protein belongs to the FGGY kinase family.

The catalysed reaction is glycerol + ATP = sn-glycerol 3-phosphate + ADP + H(+). It functions in the pathway polyol metabolism; glycerol degradation via glycerol kinase pathway; sn-glycerol 3-phosphate from glycerol: step 1/1. Inhibited by fructose 1,6-bisphosphate (FBP). Key enzyme in the regulation of glycerol uptake and metabolism. Catalyzes the phosphorylation of glycerol to yield sn-glycerol 3-phosphate. The polypeptide is Glycerol kinase (Mycolicibacterium vanbaalenii (strain DSM 7251 / JCM 13017 / BCRC 16820 / KCTC 9966 / NRRL B-24157 / PYR-1) (Mycobacterium vanbaalenii)).